Here is a 440-residue protein sequence, read N- to C-terminus: D-serine dehydratase (440 aa).

At Lys-116 the chain carries N6-(pyridoxal phosphate)lysine.

It belongs to the serine/threonine dehydratase family. DsdA subfamily. As to quaternary structure, monomer. The cofactor is pyridoxal 5'-phosphate.

The enzyme catalyses D-serine = pyruvate + NH4(+). The chain is D-serine dehydratase from Salmonella dublin (strain CT_02021853).